The sequence spans 377 residues: Chaperone protein DnaJ (377 aa).

A J domain is found at 5–70; sequence DYYEVLGVAK…QKRAAYDRYG (66 aa). A CR-type zinc finger spans residues 137–215; sequence GFDTEIRVPS…CDGVGRTRRN (79 aa). Positions 150, 153, 167, 170, 189, 192, 203, and 206 each coordinate Zn(2+). CXXCXGXG motif repeat units lie at residues 150–157, 167–174, 189–196, and 203–210; these read CDTCHGSG, CRTCGGSG, CPTCHGTG, and CPSCDGVG.

It belongs to the DnaJ family. As to quaternary structure, homodimer. Zn(2+) is required as a cofactor.

It is found in the cytoplasm. In terms of biological role, participates actively in the response to hyperosmotic and heat shock by preventing the aggregation of stress-denatured proteins and by disaggregating proteins, also in an autonomous, DnaK-independent fashion. Unfolded proteins bind initially to DnaJ; upon interaction with the DnaJ-bound protein, DnaK hydrolyzes its bound ATP, resulting in the formation of a stable complex. GrpE releases ADP from DnaK; ATP binding to DnaK triggers the release of the substrate protein, thus completing the reaction cycle. Several rounds of ATP-dependent interactions between DnaJ, DnaK and GrpE are required for fully efficient folding. Also involved, together with DnaK and GrpE, in the DNA replication of plasmids through activation of initiation proteins. In Bordetella parapertussis (strain 12822 / ATCC BAA-587 / NCTC 13253), this protein is Chaperone protein DnaJ.